The chain runs to 134 residues: Putative cytochrome c oxidase subunit 6b-like (134 aa).

Residues 1–61 (MSSAQMDPHD…DSGRETDAAV (61 aa)) are disordered. Composition is skewed to basic and acidic residues over residues 7–19 (DPHD…DISK) and 44–61 (ATFR…DAAV). The region spanning 71-114 (TRHCFNRFMQYHKCIEKNGRDANDCNNLRDYVRSICPEELVSKI) is the CHCH domain. The Cx9C motif signature appears at 74 to 84 (CFNRFMQYHKC). 2 disulfides stabilise this stretch: Cys74/Cys106 and Cys84/Cys95. The Cx10C motif motif lies at 95-106 (CNNLRDYVRSIC).

Belongs to the cytochrome c oxidase subunit 6B (TC 3.D.4.8) family.

The protein localises to the mitochondrion. In terms of biological role, this protein is one of the nuclear-coded polypeptide chains of cytochrome c oxidase, the terminal oxidase in mitochondrial electron transport. This protein may be one of the heme-binding subunits of the oxidase. In Arabidopsis thaliana (Mouse-ear cress), this protein is Putative cytochrome c oxidase subunit 6b-like.